The primary structure comprises 385 residues: Torsin-3A (385 aa).

Residues methionine 1 to glycine 21 form the signal peptide. An N-linked (GlcNAc...) asparagine glycan is attached at asparagine 110. ATP is bound at residue glycine 155–asparagine 162.

Belongs to the ClpA/ClpB family. Torsin subfamily. In terms of assembly, interacts with TOR1AIP1. Post-translationally, N-glycosylated.

It localises to the cytoplasm. The protein resides in the endoplasmic reticulum lumen. The chain is Torsin-3A (Tor3a) from Mus musculus (Mouse).